A 354-amino-acid chain; its full sequence is Guanine nucleotide-binding protein G(i) subunit alpha (354 aa).

A lipid anchor (N-myristoyl glycine) is attached at Gly2. Residue Cys3 is the site of S-palmitoyl cysteine attachment. Residues 32 to 354 form the G-alpha domain; the sequence is REVKLLLLGA…KNNLKDCGLF (323 aa). A G1 motif region spans residues 35–48; it reads KLLLLGAGESGKST. GTP contacts are provided by residues 40–47, 175–181, 200–204, 269–272, and Ala326; these read GAGESGKS, LRTRVKT, DVGGQ, and NKKD. Residues Ser47 and Thr181 each coordinate Mg(2+). Residues 173-181 are G2 motif; the sequence is DVLRTRVKT. A G3 motif region spans residues 196 to 205; sequence FKMFDVGGQR. The tract at residues 265–272 is G4 motif; the sequence is ILFLNKKD. The segment at 324–329 is G5 motif; the sequence is TCATDT.

The protein belongs to the G-alpha family. G(i/o/t/z) subfamily. As to quaternary structure, g proteins are composed of 3 units; alpha, beta and gamma. The alpha chain contains the guanine nucleotide binding site.

Its function is as follows. Guanine nucleotide-binding proteins (G proteins) are involved as modulators or transducers in various transmembrane signaling systems. The G(i) proteins are involved in hormonal regulation of adenylate cyclase: they inhibit the cyclase in response to beta-adrenergic stimuli. This chain is Guanine nucleotide-binding protein G(i) subunit alpha, found in Lymnaea stagnalis (Great pond snail).